We begin with the raw amino-acid sequence, 585 residues long: Putative indole-3-acetic acid-amido synthetase GH3.9 (585 aa).

The protein belongs to the IAA-amido conjugating enzyme family.

In terms of biological role, catalyzes the synthesis of indole-3-acetic acid (IAA)-amino acid conjugates, providing a mechanism for the plant to cope with the presence of excess auxin. This is Putative indole-3-acetic acid-amido synthetase GH3.9 (GH3.9) from Arabidopsis thaliana (Mouse-ear cress).